Consider the following 292-residue polypeptide: Cbb3-type cytochrome c oxidase subunit CcoP (292 aa).

The next 2 helical transmembrane spans lie at 11-31 (FGLI…SSLI) and 62-82 (VGWI…FFFG). Cytochrome c domains lie at 116-195 (ELVD…MAEI) and 205-288 (QLID…QSLK). Residues cysteine 129, cysteine 132, histidine 133, methionine 174, cysteine 219, cysteine 222, histidine 223, and methionine 264 each coordinate heme c.

The protein belongs to the CcoP / FixP family. In terms of assembly, component of the cbb3-type cytochrome c oxidase at least composed of CcoN, CcoO, CcoQ and CcoP. The cofactor is heme c.

It is found in the cell inner membrane. Its pathway is energy metabolism; oxidative phosphorylation. C-type cytochrome. Part of the cbb3-type cytochrome c oxidase complex. CcoP subunit is required for transferring electrons from donor cytochrome c via its heme groups to CcoO subunit. From there, electrons are shuttled to the catalytic binuclear center of CcoN subunit where oxygen reduction takes place. The complex also functions as a proton pump. This chain is Cbb3-type cytochrome c oxidase subunit CcoP, found in Helicobacter pylori (Campylobacter pylori).